A 571-amino-acid polypeptide reads, in one-letter code: PHD and RING finger domain-containing protein C126.07c (571 aa).

The RING-type 1; atypical zinc-finger motif lies at 18–79 (CIICLSNLPN…RVANTCPLCR (62 aa)). The segment at 122–170 (TCRCVICGRSDHAEVLLLCDGCDDAYHTYCLNMDAVPIEEFYCPNCVLL) adopts a PHD-type zinc-finger fold. Residues 125–168 (CVICGRSDHAEVLLLCDGCDDAYHTYCLNMDAVPIEEFYCPNCV) form an RING-type 2; degenerate zinc finger. The span at 305 to 324 (ATEATISNPRPSSGRFQQTP) shows a compositional bias: polar residues. The disordered stretch occupies residues 305–377 (ATEATISNPR…VLGNNSSSKS (73 aa)). Over residues 346 to 356 (RRQKRPTRRHI) the composition is skewed to basic residues. Positions 359–377 (SNKSSGSSTVLGNNSSSKS) are enriched in polar residues.

The protein resides in the cytoplasm. Its subcellular location is the nucleus. This Schizosaccharomyces pombe (strain 972 / ATCC 24843) (Fission yeast) protein is PHD and RING finger domain-containing protein C126.07c.